Here is a 457-residue protein sequence, read N- to C-terminus: Tubulin alpha chain (457 aa).

8 residues coordinate GTP: glutamine 12, glutamate 77, serine 146, glycine 150, threonine 151, threonine 186, asparagine 213, and asparagine 235. Residue glutamate 77 participates in Mg(2+) binding.

Belongs to the tubulin family. As to quaternary structure, dimer of alpha and beta chains. A typical microtubule is a hollow water-filled tube with an outer diameter of 25 nm and an inner diameter of 15 nM. Alpha-beta heterodimers associate head-to-tail to form protofilaments running lengthwise along the microtubule wall with the beta-tubulin subunit facing the microtubule plus end conferring a structural polarity. Microtubules usually have 13 protofilaments but different protofilament numbers can be found in some organisms and specialized cells. Mg(2+) serves as cofactor. In terms of processing, undergoes a tyrosination/detyrosination cycle, the cyclic removal and re-addition of a C-terminal tyrosine residue by the enzymes tubulin tyrosine carboxypeptidase (TTCP) and tubulin tyrosine ligase (TTL), respectively.

The protein localises to the cytoplasm. The protein resides in the cytoskeleton. It carries out the reaction GTP + H2O = GDP + phosphate + H(+). Its function is as follows. Tubulin is the major constituent of microtubules, a cylinder consisting of laterally associated linear protofilaments composed of alpha- and beta-tubulin heterodimers. Microtubules grow by the addition of GTP-tubulin dimers to the microtubule end, where a stabilizing cap forms. Below the cap, tubulin dimers are in GDP-bound state, owing to GTPase activity of alpha-tubulin. In Dictyostelium discoideum (Social amoeba), this protein is Tubulin alpha chain (tubA).